The sequence spans 176 residues: uncharacterized protein (176 aa).

The segment covering 15–28 (TSSNPPASASQSTG) has biased composition (polar residues). Disordered regions lie at residues 15 to 100 (TSSN…TSAG) and 125 to 176 (ASLR…NLGA). Basic and acidic residues predominate over residues 43 to 52 (FIDKVTDKPS).

This is an uncharacterized protein from Homo sapiens (Human).